Consider the following 301-residue polypeptide: Quinolinate synthase (301 aa).

Iminosuccinate is bound by residues H21 and S38. Residue C83 coordinates [4Fe-4S] cluster. Iminosuccinate contacts are provided by residues Y109–N111 and S126. A [4Fe-4S] cluster-binding site is contributed by C169. Residues H195–E197 and T212 each bind iminosuccinate. Residue C257 coordinates [4Fe-4S] cluster.

Belongs to the quinolinate synthase family. Type 2 subfamily. It depends on [4Fe-4S] cluster as a cofactor.

It is found in the cytoplasm. The enzyme catalyses iminosuccinate + dihydroxyacetone phosphate = quinolinate + phosphate + 2 H2O + H(+). It functions in the pathway cofactor biosynthesis; NAD(+) biosynthesis; quinolinate from iminoaspartate: step 1/1. In terms of biological role, catalyzes the condensation of iminoaspartate with dihydroxyacetone phosphate to form quinolinate. The polypeptide is Quinolinate synthase (Clostridium perfringens (strain 13 / Type A)).